The sequence spans 269 residues: MEDKFDLSSARLVVVKIGSTLVLDRETSGIRSSWLESLTEDVSRLLTRGQQVVLVSSGAVAIGSTIVDRLATYSQVSHKQAAAALGQVQLTHAYSESLKRHGLQVAQLLMGRGDLVDPAHRLNTRAVLLRLIDLGAVPLVNENDTTATCGTRVGDNDRLAAWIAEIINADLLILLSNVDGLFMKDPRNNPLTPMLTEVESITREIEAMATQSVDPYSSGGMISKIEAGKIAMNAGCRMIIANGTRSHPLYAIESGGPSTHFIPVARDRV.

K16 is an ATP binding site. 3 residues coordinate substrate: S57, D144, and N156. 218–224 (SGGMISK) is a binding site for ATP.

The protein belongs to the glutamate 5-kinase family.

The protein localises to the cytoplasm. The catalysed reaction is L-glutamate + ATP = L-glutamyl 5-phosphate + ADP. The protein operates within amino-acid biosynthesis; L-proline biosynthesis; L-glutamate 5-semialdehyde from L-glutamate: step 1/2. Its function is as follows. Catalyzes the transfer of a phosphate group to glutamate to form L-glutamate 5-phosphate. The chain is Glutamate 5-kinase 2 from Rhizobium meliloti (strain 1021) (Ensifer meliloti).